Reading from the N-terminus, the 154-residue chain is Yop proteins translocation protein O (154 aa).

The disordered stretch occupies residues 132–154 (ELNQQHYQEEQEQEEFLQHHRNA).

It belongs to the SpaM family.

In terms of biological role, component of the yop secretion machinery. The protein is Yop proteins translocation protein O (yscO) of Yersinia pseudotuberculosis serotype I (strain IP32953).